The chain runs to 129 residues: Small ribosomal subunit protein uS9 (129 aa).

This sequence belongs to the universal ribosomal protein uS9 family.

The sequence is that of Small ribosomal subunit protein uS9 from Helicobacter pylori (strain HPAG1).